We begin with the raw amino-acid sequence, 655 residues long: p-hydroxybenzoic acid efflux pump subunit AaeB (655 aa).

The next 11 membrane-spanning stretches (helical) occupy residues 13-33 (FAVK…HFQL), 38-58 (WAVL…GGEP), 69-89 (LRII…IAMI), 93-113 (LLMI…SSLV), 121-141 (WGLA…EPLL), 152-172 (EIVI…PRSI), 370-390 (LFWL…IAVV), 407-427 (FIYG…VIIP), 431-451 (QSML…GIEV), 459-479 (MGAL…TFHF), and 482-502 (FLDS…VILL).

Belongs to the aromatic acid exporter ArAE (TC 2.A.85) family.

The protein localises to the cell inner membrane. Forms an efflux pump with AaeA. Could function as a metabolic relief valve, allowing to eliminate certain compounds when they accumulate to high levels in the cell. This is p-hydroxybenzoic acid efflux pump subunit AaeB from Shigella boydii serotype 18 (strain CDC 3083-94 / BS512).